Here is a 314-residue protein sequence, read N- to C-terminus: Carbamate kinase (314 aa).

The protein belongs to the carbamate kinase family. As to quaternary structure, homodimer.

It is found in the cytoplasm. It carries out the reaction hydrogencarbonate + NH4(+) + ATP = carbamoyl phosphate + ADP + H2O + H(+). It functions in the pathway metabolic intermediate metabolism; carbamoyl phosphate degradation; CO(2) and NH(3) from carbamoyl phosphate: step 1/1. The polypeptide is Carbamate kinase (arcC) (Clostridium perfringens (strain 13 / Type A)).